The primary structure comprises 573 residues: Acyl-coenzyme A synthetase ACSM1, mitochondrial (573 aa).

The N-terminal 35 residues, 1–35 (MQWLKSFQICKVLQGFSLSPTQLHRRLFSRVGAPR), are a transit peptide targeting the mitochondrion. K81 carries the post-translational modification N6-succinyllysine. N6-acetyllysine; alternate is present on K142. Position 142 is an N6-succinyllysine; alternate (K142). The residue at position 179 (K179) is an N6-succinyllysine. An N6-acetyllysine; alternate modification is found at K200. N6-succinyllysine; alternate is present on K200. K210 bears the N6-acetyllysine mark. An ATP-binding site is contributed by 222 to 230 (TSGTTGYPK). N6-succinyllysine occurs at positions 233 and 324. Residues K352 and K387 each carry the N6-acetyllysine; alternate modification. An N6-succinyllysine; alternate mark is found at K352 and K387. Residues D448 and R463 each contribute to the ATP site. An N6-succinyllysine modification is found at K501. N6-acetyllysine is present on K527. Residue K534 is modified to N6-acetyllysine; alternate. K534 is subject to N6-succinyllysine; alternate. N6-acetyllysine is present on K545. K559 provides a ligand contact to ATP.

Belongs to the ATP-dependent AMP-binding enzyme family. Monomer. The cofactor is Mg(2+). Mn(2+) is required as a cofactor. In terms of tissue distribution, highly expressed in liver and kidney.

The protein localises to the mitochondrion matrix. Its subcellular location is the mitochondrion. It catalyses the reaction a medium-chain fatty acid + ATP + CoA = a medium-chain fatty acyl-CoA + AMP + diphosphate. The enzyme catalyses benzoate + ATP + CoA = benzoyl-CoA + AMP + diphosphate. It carries out the reaction (R)-lipoate + GTP + H(+) = (R)-lipoyl-GMP + diphosphate. The catalysed reaction is octanoate + ATP + CoA = octanoyl-CoA + AMP + diphosphate. It catalyses the reaction decanoate + ATP + CoA = decanoyl-CoA + AMP + diphosphate. The enzyme catalyses dodecanoate + ATP + CoA = dodecanoyl-CoA + AMP + diphosphate. It carries out the reaction tetradecanoate + ATP + CoA = tetradecanoyl-CoA + AMP + diphosphate. The catalysed reaction is hexanoate + ATP + CoA = hexanoyl-CoA + AMP + diphosphate. It catalyses the reaction butanoate + ATP + CoA = butanoyl-CoA + AMP + diphosphate. The enzyme catalyses hexadecanoate + ATP + CoA = hexadecanoyl-CoA + AMP + diphosphate. Functionally, catalyzes the activation of fatty acids by CoA to produce an acyl-CoA, the first step in fatty acid metabolism. Capable of activating medium-chain fatty acids (e.g. butyric (C4) to decanoic (C10) acids), and certain carboxylate-containing xenobiotics, e.g. benzoate. Also catalyzes the activation of lipoate to lipoyl-nucleoside monophosphate. Activates lipoate with GTP at a 1000-fold higher rate than with ATP and activates both (R)- and (S)-lipoate to the respective lipoyl-GMP, with a preference for (R)-lipoate. The protein is Acyl-coenzyme A synthetase ACSM1, mitochondrial (Acsm1) of Mus musculus (Mouse).